Here is a 664-residue protein sequence, read N- to C-terminus: Protein fem-1 homolog CG6966 (664 aa).

ANK repeat units follow at residues Asn40–Gln70, Glu82–Ser111, Thr115–Val144, His148–Arg177, Lys181–Val210, and Tyr213–Glu242. 2 TPR repeats span residues Ile245 to Glu279 and Ser335 to Ile368. The disordered stretch occupies residues Gln433–Ser460. Residues Ser450–Ser460 show a composition bias toward low complexity. 2 ANK repeats span residues Phe529 to Ala571 and Ala575 to Thr605.

This sequence belongs to the fem-1 family. Component of a CRL2 E3 ubiquitin-protein ligase complex, also named ECS (Elongin BC-CUL2/5-SOCS-box protein) complex.

The protein operates within protein modification; protein ubiquitination. Functionally, substrate-recognition component of a Cul2-RING (CRL2) E3 ubiquitin-protein ligase complex of the DesCEND (destruction via C-end degrons) pathway, which recognizes a C-degron located at the extreme C terminus of target proteins, leading to their ubiquitination and degradation. The C-degron recognized by the DesCEND pathway is usually a motif of less than ten residues and can be present in full-length proteins, truncated proteins or proteolytically cleaved forms. In Drosophila melanogaster (Fruit fly), this protein is Protein fem-1 homolog CG6966.